A 239-amino-acid polypeptide reads, in one-letter code: Orotidine 5'-phosphate decarboxylase (239 aa).

Substrate-binding positions include aspartate 10, lysine 33, 60–69 (DLKLYDIPNT), threonine 124, arginine 186, glutamine 195, glycine 215, and arginine 216. The active-site Proton donor is the lysine 62.

It belongs to the OMP decarboxylase family. Type 1 subfamily. Homodimer.

It catalyses the reaction orotidine 5'-phosphate + H(+) = UMP + CO2. Its pathway is pyrimidine metabolism; UMP biosynthesis via de novo pathway; UMP from orotate: step 2/2. In terms of biological role, catalyzes the decarboxylation of orotidine 5'-monophosphate (OMP) to uridine 5'-monophosphate (UMP). The protein is Orotidine 5'-phosphate decarboxylase of Latilactobacillus sakei subsp. sakei (strain 23K) (Lactobacillus sakei subsp. sakei).